We begin with the raw amino-acid sequence, 91 residues long: UPF0512 protein E (91 aa).

Over residues 1-25 the composition is skewed to low complexity; the sequence is MAIFKSISSISNSTSAMGSSNSTSN. The interval 1 to 26 is disordered; the sequence is MAIFKSISSISNSTSAMGSSNSTSNR.

The protein belongs to the UPF0512 family.

In Dictyostelium discoideum (Social amoeba), this protein is UPF0512 protein E.